Consider the following 186-residue polypeptide: Methyl-CpG-binding domain protein 3-like 1 (186 aa).

The interval 1–104 is transcription repressor; that stretch reads MGKTSQRKQC…TSTDTVASAS (104 aa).

The protein belongs to the MBD3L family. As to expression, highly expressed in testis. Not detected in the other tissues tested.

It localises to the nucleus. In terms of biological role, transcriptional repressor. This Mus musculus (Mouse) protein is Methyl-CpG-binding domain protein 3-like 1 (Mbd3l1).